The following is a 705-amino-acid chain: Fatty acid oxidation complex subunit alpha (705 aa).

An enoyl-CoA hydratase region spans residues 1–190 (MSEQKAFNLK…KLGVVDACVP (190 aa)). The interval 308 to 705 (SKVGMVGVLG…AGEGRRFYDN (398 aa)) is 3-hydroxyacyl-CoA dehydrogenase.

This sequence in the N-terminal section; belongs to the enoyl-CoA hydratase/isomerase family. It in the central section; belongs to the 3-hydroxyacyl-CoA dehydrogenase family. Heterotetramer of two alpha chains (FadJ) and two beta chains (FadI).

It localises to the cytoplasm. It carries out the reaction a (3S)-3-hydroxyacyl-CoA = a (2E)-enoyl-CoA + H2O. The enzyme catalyses a 4-saturated-(3S)-3-hydroxyacyl-CoA = a (3E)-enoyl-CoA + H2O. It catalyses the reaction a (3S)-3-hydroxyacyl-CoA + NAD(+) = a 3-oxoacyl-CoA + NADH + H(+). The catalysed reaction is (3S)-3-hydroxybutanoyl-CoA = (3R)-3-hydroxybutanoyl-CoA. It functions in the pathway lipid metabolism; fatty acid beta-oxidation. Catalyzes the formation of a hydroxyacyl-CoA by addition of water on enoyl-CoA. Also exhibits 3-hydroxyacyl-CoA epimerase and 3-hydroxyacyl-CoA dehydrogenase activities. The chain is Fatty acid oxidation complex subunit alpha from Vibrio vulnificus (strain CMCP6).